A 198-amino-acid polypeptide reads, in one-letter code: dITP/XTP pyrophosphatase (198 aa).

Residue 7–12 coordinates substrate; the sequence is THNPHK. Mg(2+)-binding residues include E40 and D69. D69 acts as the Proton acceptor in catalysis. Residues T70, 151-154, K174, and 179-180 each bind substrate; these read FGYD and HR.

The protein belongs to the HAM1 NTPase family. Homodimer. The cofactor is Mg(2+).

It catalyses the reaction XTP + H2O = XMP + diphosphate + H(+). The enzyme catalyses dITP + H2O = dIMP + diphosphate + H(+). The catalysed reaction is ITP + H2O = IMP + diphosphate + H(+). In terms of biological role, pyrophosphatase that catalyzes the hydrolysis of nucleoside triphosphates to their monophosphate derivatives, with a high preference for the non-canonical purine nucleotides XTP (xanthosine triphosphate), dITP (deoxyinosine triphosphate) and ITP. Seems to function as a house-cleaning enzyme that removes non-canonical purine nucleotides from the nucleotide pool, thus preventing their incorporation into DNA/RNA and avoiding chromosomal lesions. This is dITP/XTP pyrophosphatase from Thermoanaerobacter sp. (strain X514).